We begin with the raw amino-acid sequence, 139 residues long: Thioredoxin H-type (139 aa).

Residues 20 to 132 (ELAGGNVHLI…LHKKITAILD (113 aa)) form the Thioredoxin domain. Active-site nucleophile residues include Cys58 and Cys61. An intrachain disulfide couples Cys58 to Cys61.

Its subcellular location is the cytoplasm. Its function is as follows. Participates in various redox reactions through the reversible oxidation of the active center dithiol to a disulfide. The H form is known to activate a number of cytosolic enzymes. This chain is Thioredoxin H-type, found in Populus jackii (Balm of Gilead).